We begin with the raw amino-acid sequence, 735 residues long: Rho GTPase-activating protein SYDE1 (735 aa).

Disordered regions lie at residues 1-253, 601-655, and 669-706; these read MAEP…PYEV, PDTR…AGDW, and FLSG…FDAP. The span at 14 to 47 shows a compositional bias: basic and acidic residues; the sequence is RGREKLPRKKSDAKDRGRPAQRSEPKPPEPEPRV. Over residues 151 to 160 the composition is skewed to low complexity; it reads PTKTSRTKSP. Phosphoserine occurs at positions 224, 231, 235, and 244. One can recognise a C2 domain in the interval 249–366; it reads RPYEVGPSAR…FRGCQAQQLA (118 aa). The region spanning 398-604 is the Rho-GAP domain; sequence LPLQLLVERE…YLLQSWPDTR (207 aa). Positions 669–679 are enriched in basic and acidic residues; the sequence is FLSGPDYDHVT. Phosphoserine is present on residues S681 and S683.

In terms of processing, palmitoylated. Probably palmitoylated by ZDHHC3 and ZDHHC7.

Its function is as follows. GTPase activator for the Rho-type GTPases. As a GCM1 downstream effector, it is involved in placental development and positively regulates trophoblast cells migration. It regulates cytoskeletal remodeling by controlling the activity of Rho GTPases including RHOA, CDC42 and RAC1. In Rattus norvegicus (Rat), this protein is Rho GTPase-activating protein SYDE1 (Syde1).